Reading from the N-terminus, the 412-residue chain is L-threonine:uridine-5'-aldehyde transaldolase (412 aa).

K229 is subject to N6-(pyridoxal phosphate)lysine.

Belongs to the SHMT family. Requires pyridoxal 5'-phosphate as cofactor.

The catalysed reaction is uridine-5'-aldehyde + L-threonine = (5'S,6'S)-C-glycyluridine + acetaldehyde. Its pathway is antibiotic biosynthesis. Functionally, transaldolase involved in the biosynthesis of the capuramycin-type nucleoside antibiotic A-503083. Catalyzes the condensation of L-threonine and uridine-5'-aldehyde to form 5'-C-glycyluridine (GlyU). Forms (5'S,6'S)-GlyU. This is L-threonine:uridine-5'-aldehyde transaldolase from Streptomyces sp.